We begin with the raw amino-acid sequence, 519 residues long: Putative tyrosine carboxypeptidase MATCAP2 (519 aa).

Residues Ser63 to Ala103 are disordered. His330 serves as a coordination point for Zn(2+). Glu331 functions as the Nucleophile in the catalytic mechanism. The Zn(2+) site is built by His335 and Glu366.

Zn(2+) serves as cofactor.

Its function is as follows. Putative tyrosine carboxypeptidase. The sequence is that of Putative tyrosine carboxypeptidase MATCAP2 from Mus musculus (Mouse).